The sequence spans 319 residues: Quinolinate synthase (319 aa).

Iminosuccinate contacts are provided by histidine 34 and serine 51. Cysteine 96 contacts [4Fe-4S] cluster. Iminosuccinate is bound by residues 122–124 (YIN) and serine 139. Residue cysteine 182 coordinates [4Fe-4S] cluster. Iminosuccinate is bound by residues 208 to 210 (HPE) and threonine 225. Cysteine 276 contacts [4Fe-4S] cluster.

The protein belongs to the quinolinate synthase family. Type 2 subfamily. The cofactor is [4Fe-4S] cluster.

Its subcellular location is the cytoplasm. It carries out the reaction iminosuccinate + dihydroxyacetone phosphate = quinolinate + phosphate + 2 H2O + H(+). It participates in cofactor biosynthesis; NAD(+) biosynthesis; quinolinate from iminoaspartate: step 1/1. Functionally, catalyzes the condensation of iminoaspartate with dihydroxyacetone phosphate to form quinolinate. The sequence is that of Quinolinate synthase from Thermosynechococcus vestitus (strain NIES-2133 / IAM M-273 / BP-1).